The following is an 847-amino-acid chain: Signal transducer and activator of transcription 6 (847 aa).

An N-acetylserine modification is found at Ser2. An SH2 domain is found at 517-632 (WFDGVLDLTK…EAFRSHYKPE (116 aa)). Tyr641 is subject to Phosphotyrosine; by JAK. An LXXLL motif motif is present at residues 802-806 (LTKLL). A disordered region spans residues 809 to 847 (GQGESGGGSLGAQPLLQPSHYGQSGISMSHMDLRANPSW).

This sequence belongs to the transcription factor STAT family. As to quaternary structure, forms a homodimer or a heterodimer with a related family member. Interacts with NCOA1 via its C-terminal LXXLL motif. Tyrosine phosphorylated on Tyr-641 following stimulation by IL4/interleukin-4. Tyrosine phosphorylated following stimulation by IL3/interleukin-3. Dephosphorylation on tyrosine residues by PTPN2 negatively regulates the IL4/interleukin-4 mediated signaling. Post-translationally, mono-ADP-ribosylated by PARP14.

The protein resides in the cytoplasm. The protein localises to the nucleus. Carries out a dual function: signal transduction and activation of transcription. Involved in IL4/interleukin-4- and IL3/interleukin-3-mediated signaling. The polypeptide is Signal transducer and activator of transcription 6 (STAT6) (Homo sapiens (Human)).